Consider the following 497-residue polypeptide: Anthranilate synthase component 1 (497 aa).

Residues Ser49 and 271 to 273 each bind L-tryptophan; that span reads PYL. Residue 312–313 participates in chorismate binding; it reads GT. A Mg(2+)-binding site is contributed by Glu339. Residues Arg447, 461–463, and Gly463 each bind chorismate; that span reads GAG. Glu476 lines the Mg(2+) pocket.

It belongs to the anthranilate synthase component I family. Heterotetramer consisting of two non-identical subunits: a beta subunit (TrpG) and a large alpha subunit (TrpE). Mg(2+) is required as a cofactor.

The catalysed reaction is chorismate + L-glutamine = anthranilate + pyruvate + L-glutamate + H(+). It participates in amino-acid biosynthesis; L-tryptophan biosynthesis; L-tryptophan from chorismate: step 1/5. Feedback inhibited by tryptophan. In terms of biological role, part of a heterotetrameric complex that catalyzes the two-step biosynthesis of anthranilate, an intermediate in the biosynthesis of L-tryptophan. In the first step, the glutamine-binding beta subunit (TrpG) of anthranilate synthase (AS) provides the glutamine amidotransferase activity which generates ammonia as a substrate that, along with chorismate, is used in the second step, catalyzed by the large alpha subunit of AS (TrpE) to produce anthranilate. In the absence of TrpG, TrpE can synthesize anthranilate directly from chorismate and high concentrations of ammonia. The polypeptide is Anthranilate synthase component 1 (trpE) (Acinetobacter calcoaceticus).